Reading from the N-terminus, the 55-residue chain is uncharacterized protein (55 aa).

The helical transmembrane segment at 24–46 threads the bilayer; that stretch reads LFIIFFTYSYYYCGFLQSFNYII.

The protein resides in the membrane. This is an uncharacterized protein from Dictyostelium discoideum (Social amoeba).